Reading from the N-terminus, the 69-residue chain is UPF0150 protein Ta0767 (69 aa).

Belongs to the UPF0150 family.

This Thermoplasma acidophilum (strain ATCC 25905 / DSM 1728 / JCM 9062 / NBRC 15155 / AMRC-C165) protein is UPF0150 protein Ta0767.